A 435-amino-acid polypeptide reads, in one-letter code: Cysteine--tRNA ligase (435 aa).

A Zn(2+)-binding site is contributed by cysteine 24. The 'HIGH' region motif lies at 26–36; sequence PTVYDHIHIGN. Residues cysteine 202, histidine 228, and glutamate 232 each contribute to the Zn(2+) site. A 'KMSKS' region motif is present at residues 260-264; sequence KMSKS. Lysine 263 contacts ATP.

It belongs to the class-I aminoacyl-tRNA synthetase family. In terms of assembly, monomer. Zn(2+) is required as a cofactor.

Its subcellular location is the cytoplasm. The enzyme catalyses tRNA(Cys) + L-cysteine + ATP = L-cysteinyl-tRNA(Cys) + AMP + diphosphate. The sequence is that of Cysteine--tRNA ligase from Mycoplasmoides gallisepticum (strain R(low / passage 15 / clone 2)) (Mycoplasma gallisepticum).